A 1344-amino-acid chain; its full sequence is MMEVKAAELVAALKNSNMSVDTKVAHLQCVKSDIKQKNVPEGAVPSIFESIRLAIASQHSSLSGAGFSTLGHFLKRLLIQELHHLVALQCRALYPLLVERLGDHKERIRAQAAQSFTDMWLAAPEEVEQCVLGQALVGKNPRAKEMSMIWLSNVSSSFNIGGFSSFLTIALQMTKNYGLLFRSYVSSLVACLEDADSNVRNTAKNTVIELFENASERAKSDLKRQMATHNVRKSFVNAILASIDHGTSDMDAASRPISRAEALVHRPVSRAETQASRSVSRLDTHQRPASRMELAQSSVLHTEALPPRPVSVLSSRSETHKEVTKEVIGVERPKSRLTTAKSEPNWAVVSHTGPAEELPLPSSRPASQEGEKIDALYVSSSRQVDELFRDMMPHFEGRESEDNWIRREKDVLTLRRLTHGNAPDDYSPAYLAGLKTLLDGIFKVVNSLRTTLSTIGCLLIQDIAKRCGPRIDSMVEIMMQNLIKLCSGMKKISAQNGNATVDALIENVTFTTRILQHVSGACQDKNVQLRLFAAGWLKTLIQKQSHHKSSIEHGGGLDMMEKSVKKCLADANPGVREAMRSTFWTYYRVWPNRANEILSNLDPKSRSLLEKDPANPNAHQSAPKDSGPSRKGLANGTSSLAGRSALKEAIAAQKKARLAPAKAVPPPRPESAQSALSDKHSSAPSSSKSSVRTVPTGTSLSSLSSAPVRPAAKPRRPELNRPATADPYAARRSVATDSSTRHGNQIDGSPSAAKSKSSTPSLKSVSSTGSRDRADPVGTTRDRPKRLVISKTRSHDTHTRQHSKPIPTHSRKNSNESIPRHSPLRSEFSVTPISPNSVSLETPSTPRSHLVQDHGNLIAIASPPTHIQRTPIEPDASAEDPREHAAKATPVAIFEDTTPARSDHDDIQDAAMTLTENQTPQPSKVHSDSPIVSNKRVSNQDESVPHLTTGLGFLTGVGSVVEASELPNSDAQTDQSLFADHSLPVTHQPDSVTDSSKPSGLSSSLMVAGSPIRVANNENEIVIDSKTTHVSLPHRSSPKHNVLGELTSNEPSQRANKQIRHAANKLEDEVTTPIDDHSRHRWKKVEIADRRTSISPRSKDPTKAQQMLDKGIQRIRTKTMDILGYRKLQGIIKYHDSIFTNEEKYDEMLLALLDELESSPDDKRQPLGRPLDLKTQVLLTIRLMLIHNKIYFSAYCSRALGALVLARKYYDANCHIVSGLEETADDIIALCEPAAVIDSVLDVIITEEKDDREYRSILMGVSVLTRILSRLNADKCRVPELPLDRLGQFAASKLADRQPDVRRLAVQLCVQLHGMVANEEEYWRVLGHPRENSRNLLTYYILKK.

One copy of the HEAT 1 repeat lies at 93-131 (LYPLLVERLGDHKERIRAQAAQSFTDMWLAAPEEVEQCV). The interval 265-292 (HRPVSRAETQASRSVSRLDTHQRPASRM) is disordered. The HEAT 2 repeat unit spans residues 508 to 544 (VTFTTRILQHVSGACQDKNVQLRLFAAGWLKTLIQKQ). Disordered regions lie at residues 606-637 (RSLL…ANGT), 651-847 (AAQK…STPR), 914-945 (LTEN…ESVP), 984-1004 (PVTH…LSSS), and 1031-1054 (SLPH…PSQR). Composition is skewed to polar residues over residues 691 to 705 (VRTV…SLSS) and 735 to 747 (ATDS…NQID). The span at 748–769 (GSPSAAKSKSSTPSLKSVSSTG) shows a compositional bias: low complexity. Polar residues-rich tracts occupy residues 828 to 847 (FSVT…STPR) and 914 to 942 (LTEN…NQDE). The span at 995–1004 (SSKPSGLSSS) shows a compositional bias: low complexity.

Belongs to the CLASP family. In terms of assembly, interacts with microtubules.

It localises to the cytoplasm. The protein resides in the cytoskeleton. It is found in the nucleus. The protein localises to the spindle. In terms of biological role, microtubule binding protein that promotes the stabilization of dynamic microtubules. Required for mitotic spindle formation. In Aspergillus fumigatus (strain ATCC MYA-4609 / CBS 101355 / FGSC A1100 / Af293) (Neosartorya fumigata), this protein is Protein stu1 (stu1).